The sequence spans 536 residues: Putative beta-xylosidase (536 aa).

D14 serves as the catalytic Proton acceptor. Residue E186 is the Proton donor of the active site.

This sequence belongs to the glycosyl hydrolase 43 family.

The enzyme catalyses Hydrolysis of (1-&gt;4)-beta-D-xylans, to remove successive D-xylose residues from the non-reducing termini.. The chain is Putative beta-xylosidase (yagH) from Escherichia coli (strain K12).